The following is a 637-amino-acid chain: Chaperone protein HtpG (637 aa).

The tract at residues 1–345 (MSQQETHGFQ…SNDLPLNVSR (345 aa)) is a; substrate-binding. Residues 346–562 (EILQDNHITK…EGEMSSQMIK (217 aa)) form a b region. The c stretch occupies residues 563–637 (LMQAAGQPVP…MNQMLLANLK (75 aa)).

Belongs to the heat shock protein 90 family. Homodimer.

The protein localises to the cytoplasm. Functionally, molecular chaperone. Has ATPase activity. This Shewanella sp. (strain MR-4) protein is Chaperone protein HtpG.